Here is a 389-residue protein sequence, read N- to C-terminus: ELAV-like protein 2 (389 aa).

RRM domains are found at residues 66-145, 153-233, and 306-384; these read TNLI…YARP, ANLY…FANN, and WCIF…FKTS.

This sequence belongs to the RRM elav family. In terms of assembly, part of a ribonucleoprotein (RNP) complex, at least composed of elavl1/elrA and/or elavl2/elrB, igf2bp3/vg1RBP, ddx6/Xp54, ybx2/frgy2, lsm14b/rap55b and, in a subset of RNP complexes, stau1/staufen. Binds RNA as a homooligomer. In terms of tissue distribution, expressed in brain, testis and ovary. Ovarian expression is restricted to follicle cells surrounding the oocyte. From the early tailbud stage, expression is neural-specific and is seen in both the central and peripheral nervous system in differentiating neurons but not proliferating precursors. Expressed in the retina from stage 32 with expression becoming restricted to the ganglion cell layer by later stages.

Its subcellular location is the cytoplasm. The protein resides in the cell cortex. In terms of biological role, binds to poly-U elements and AU-rich elements (AREs) in the 3'-UTR of target mRNAs. Required for the vegetal localization of vg1 mRNA. Probably required for nervous system development. This is ELAV-like protein 2 (elavl2) from Xenopus laevis (African clawed frog).